A 212-amino-acid polypeptide reads, in one-letter code: Peptide methionine sulfoxide reductase MsrA (212 aa).

Cys52 is an active-site residue.

It belongs to the MsrA Met sulfoxide reductase family.

The enzyme catalyses L-methionyl-[protein] + [thioredoxin]-disulfide + H2O = L-methionyl-(S)-S-oxide-[protein] + [thioredoxin]-dithiol. The catalysed reaction is [thioredoxin]-disulfide + L-methionine + H2O = L-methionine (S)-S-oxide + [thioredoxin]-dithiol. Functionally, has an important function as a repair enzyme for proteins that have been inactivated by oxidation. Catalyzes the reversible oxidation-reduction of methionine sulfoxide in proteins to methionine. This is Peptide methionine sulfoxide reductase MsrA from Cronobacter sakazakii (strain ATCC BAA-894) (Enterobacter sakazakii).